The primary structure comprises 472 residues: UDP-N-acetylmuramate--L-alanine ligase (472 aa).

Residue 122–128 (GSHGKTT) participates in ATP binding.

This sequence belongs to the MurCDEF family.

Its subcellular location is the cytoplasm. It carries out the reaction UDP-N-acetyl-alpha-D-muramate + L-alanine + ATP = UDP-N-acetyl-alpha-D-muramoyl-L-alanine + ADP + phosphate + H(+). It functions in the pathway cell wall biogenesis; peptidoglycan biosynthesis. Functionally, cell wall formation. In Prochlorococcus marinus (strain SARG / CCMP1375 / SS120), this protein is UDP-N-acetylmuramate--L-alanine ligase.